A 941-amino-acid chain; its full sequence is Cell wall protein IFF3 (941 aa).

The N-terminal stretch at 1–20 (MQLFQNILVSIALLTQVVFA) is a signal peptide. Residues Asn36, Asn367, Asn686, Asn732, Asn790, Asn818, Asn825, Asn884, and Asn917 are each glycosylated (N-linked (GlcNAc...) asparagine). A lipid anchor (GPI-anchor amidated asparagine) is attached at Asn917. A propeptide spans 918 to 941 (GSNKESIENIKYLTLVVFGLMMFM) (removed in mature form).

The protein belongs to the HYR1/IFF family. The GPI-anchor is attached to the protein in the endoplasmic reticulum and serves to target the protein to the cell surface. There, the glucosamine-inositol phospholipid moiety is cleaved off and the GPI-modified mannoprotein is covalently attached via its lipidless GPI glycan remnant to the 1,6-beta-glucan of the outer cell wall layer.

Its subcellular location is the secreted. It is found in the cell wall. The protein resides in the membrane. In terms of biological role, GPI-anchored cell wall protein involved in cell wall organization, hyphal growth, as well as in host-fungal interaction and virulence. In Candida albicans (strain SC5314 / ATCC MYA-2876) (Yeast), this protein is Cell wall protein IFF3 (IFF3).